Here is a 181-residue protein sequence, read N- to C-terminus: Small ribosomal subunit protein bS16 (181 aa).

The disordered stretch occupies residues 150 to 181 (KKAAEEAAKAAAEAPAEEAAPAEEAATEAAAE). Positions 158 to 181 (KAAAEAPAEEAAPAEEAATEAAAE) are enriched in low complexity.

It belongs to the bacterial ribosomal protein bS16 family.

This Bacteroides fragilis (strain ATCC 25285 / DSM 2151 / CCUG 4856 / JCM 11019 / LMG 10263 / NCTC 9343 / Onslow / VPI 2553 / EN-2) protein is Small ribosomal subunit protein bS16.